The chain runs to 485 residues: Pyruvate kinase (485 aa).

Arginine 33 is a binding site for substrate. K(+) contacts are provided by asparagine 35, serine 37, aspartate 67, and threonine 68. 35 to 38 (NFSH) provides a ligand contact to ATP. Positions 74 and 155 each coordinate ATP. Glutamate 221 is a binding site for Mg(2+). 3 residues coordinate substrate: glycine 244, aspartate 245, and threonine 277. Mg(2+) is bound at residue aspartate 245.

It belongs to the pyruvate kinase family. In terms of assembly, homotetramer. It depends on Mg(2+) as a cofactor. Requires K(+) as cofactor.

It carries out the reaction pyruvate + ATP = phosphoenolpyruvate + ADP + H(+). Its pathway is carbohydrate degradation; glycolysis; pyruvate from D-glyceraldehyde 3-phosphate: step 5/5. The sequence is that of Pyruvate kinase (pyk) from Chlamydia trachomatis serovar D (strain ATCC VR-885 / DSM 19411 / UW-3/Cx).